The sequence spans 241 residues: MADS-box transcription factor 57 (241 aa).

Residues 1 to 61 (MGRGKIVIRR…GRLYEFSSTN (61 aa)) enclose the MADS-box domain. In terms of domain architecture, K-box spans 85–178 (IKIWQREAAS…LNVMSQQKLE (94 aa)). Residues 216–241 (LELSQSQQREGECSKTAAPELGLHLP) are disordered.

Interacts with TB1. Expressed in seedling roots and shoots. Highly expressed in young leaves.

The protein resides in the nucleus. Its function is as follows. Transcriptional factor that targets the CArG motif 5'-C(A/T)TTAAAAAG-3' in the promoter of D14. Directly suppresses D14 expression to control the outgrowth of axillary buds. This is MADS-box transcription factor 57 from Oryza sativa subsp. japonica (Rice).